Reading from the N-terminus, the 343-residue chain is L-idonate 5-dehydrogenase (NAD(P)(+)) (343 aa).

The Zn(2+) site is built by Cys40, His65, Cys93, Cys96, Cys99, Cys107, and Glu153.

Belongs to the zinc-containing alcohol dehydrogenase family. It depends on Zn(2+) as a cofactor.

It carries out the reaction L-idonate + NADP(+) = 5-dehydro-D-gluconate + NADPH + H(+). The enzyme catalyses L-idonate + NAD(+) = 5-dehydro-D-gluconate + NADH + H(+). Its pathway is carbohydrate acid metabolism; L-idonate degradation. Functionally, catalyzes the NADH/NADPH-dependent oxidation of L-idonate to 5-ketogluconate (5KG). This is L-idonate 5-dehydrogenase (NAD(P)(+)) (idnD) from Escherichia coli (strain K12).